The chain runs to 320 residues: Aspartate carbamoyltransferase catalytic subunit (320 aa).

Carbamoyl phosphate is bound by residues arginine 53 and threonine 54. Lysine 82 is a binding site for L-aspartate. Arginine 103, histidine 131, and glutamine 134 together coordinate carbamoyl phosphate. L-aspartate contacts are provided by arginine 164 and arginine 227. Carbamoyl phosphate contacts are provided by leucine 266 and proline 267.

It belongs to the aspartate/ornithine carbamoyltransferase superfamily. ATCase family. As to quaternary structure, heterododecamer (2C3:3R2) of six catalytic PyrB chains organized as two trimers (C3), and six regulatory PyrI chains organized as three dimers (R2).

It carries out the reaction carbamoyl phosphate + L-aspartate = N-carbamoyl-L-aspartate + phosphate + H(+). It functions in the pathway pyrimidine metabolism; UMP biosynthesis via de novo pathway; (S)-dihydroorotate from bicarbonate: step 2/3. Functionally, catalyzes the condensation of carbamoyl phosphate and aspartate to form carbamoyl aspartate and inorganic phosphate, the committed step in the de novo pyrimidine nucleotide biosynthesis pathway. This is Aspartate carbamoyltransferase catalytic subunit from Bifidobacterium longum (strain NCC 2705).